A 585-amino-acid polypeptide reads, in one-letter code: Zinc finger protein C11D3.17 (585 aa).

C2H2-type zinc fingers lie at residues 31–53 and 59–82; these read FPCDQCAKRFTRHENLTRHKACH and IPCPYCEIKCKRKDLLKRHIQRFH. At Thr-553 the chain carries Phosphothreonine.

The protein resides in the nucleus. In Schizosaccharomyces pombe (strain 972 / ATCC 24843) (Fission yeast), this protein is Zinc finger protein C11D3.17.